Consider the following 122-residue polypeptide: Large ribosomal subunit protein uL14c (122 aa).

It belongs to the universal ribosomal protein uL14 family. In terms of assembly, part of the 50S ribosomal subunit.

The protein localises to the plastid. It is found in the chloroplast. Its function is as follows. Binds to 23S rRNA. This Morus indica (Mulberry) protein is Large ribosomal subunit protein uL14c.